A 251-amino-acid polypeptide reads, in one-letter code: Tropomyosin-2 (251 aa).

Residues 1-251 (MSGEEKLGKL…DTVADEPDDE (251 aa)) adopt a coiled-coil conformation.

The protein belongs to the tropomyosin family. In terms of assembly, homodimer. As to expression, striated muscle specific.

The protein is Tropomyosin-2 (TPM2) of Podocoryna carnea (Hydrozoan).